The sequence spans 784 residues: Protein translocase subunit SecA 2 (784 aa).

ATP is bound by residues Gln-94, Gly-112–Thr-116, and Asp-501.

Belongs to the SecA family. As to quaternary structure, monomer and homodimer. Part of the essential Sec protein translocation apparatus which comprises SecA, SecYEG and auxiliary proteins SecDF. Other proteins may also be involved.

It is found in the cell membrane. Its subcellular location is the cytoplasm. The catalysed reaction is ATP + H2O + cellular proteinSide 1 = ADP + phosphate + cellular proteinSide 2.. Its function is as follows. Part of the Sec protein translocase complex. Interacts with the SecYEG preprotein conducting channel. Has a central role in coupling the hydrolysis of ATP to the transfer of proteins into and across the cell membrane, serving as an ATP-driven molecular motor driving the stepwise translocation of polypeptide chains across the membrane. The sequence is that of Protein translocase subunit SecA 2 from Mycolicibacterium smegmatis (strain ATCC 700084 / mc(2)155) (Mycobacterium smegmatis).